The sequence spans 208 residues: Ribosome maturation factor RimP (208 aa).

The protein belongs to the RimP family.

It is found in the cytoplasm. Its function is as follows. Required for maturation of 30S ribosomal subunits. The chain is Ribosome maturation factor RimP from Bartonella tribocorum (strain CIP 105476 / IBS 506).